The primary structure comprises 168 residues: Small ribosomal subunit protein uS5c (168 aa).

Positions 17-80 constitute an S5 DRBM domain; it reads WQERVVQIRR…SDGKKKIVSV (64 aa).

This sequence belongs to the universal ribosomal protein uS5 family. As to quaternary structure, part of the 30S ribosomal subunit. Contacts protein S4.

It is found in the plastid. The protein localises to the chloroplast. Functionally, with S4 and S12 plays an important role in translational accuracy. This Rhodomonas salina (Cryptomonas salina) protein is Small ribosomal subunit protein uS5c (rps5).